Here is a 78-residue protein sequence, read N- to C-terminus: Probable [Fe-S]-dependent transcriptional repressor (78 aa).

The iron-sulfur cluster site is built by cysteine 56, cysteine 61, cysteine 64, and cysteine 70.

The protein belongs to the FeoC family.

Functionally, may function as a transcriptional regulator that controls feoABC expression. The polypeptide is Probable [Fe-S]-dependent transcriptional repressor (Enterobacter sp. (strain 638)).